The primary structure comprises 610 residues: MIASQFLSALTLVLLIKESGAWSYSASTTNMTFDEASAYCQQRYTHLVAIQNQEEIKYLNSIFNHSPSYYWIGIRKVNDKWVWIGTQKPLTEEAKNWAPGEPNNKQNEDCVEIYIKRYKDAGKWNDENCNKKKLALCYTAACTHTSCSGHGECVETINNYTCQCHPGFTGLRCEQVVTCQAQEAPEHGRLVCTHPLGNFSYNSSCSVSCEEGYLPSRTEAMQCTSSGEWSAPPPACHVVECDALTNPANGVMQCSQSPGSFPWNTTCTFDCQEGFELTGPQHLQCTPSGNWDNEKPTCKAVTCGAGGHPQNGFVNCSHSSAGEFTFNSSCNFTCEEGFVLQGPAQVECTAQGQWTQQVPVCKALQCKALSRPERGYMSCRPSTSGSFQSGSSCEFSCEQGFVLKGSKKLRCGPTGEWDSEKPTCEAVRCDAVRQPQGGLVRCTHSAAGEFTYKSSCAFSCEEGFELRGSAQLECTLQGQWTQEVPSCQVVQCASLAVPGKVSMSCSGEPVFGAVCTFACPEGWTLNGSAALTCGATGHWSGMLPTCEATAKSNIPLTVGLSAAGTSLLTLASFLFWLLKRLRRKAKKFVPASSYQSLQSDGSYQMPSESA.

An N-terminal signal peptide occupies residues 1-21 (MIASQFLSALTLVLLIKESGA). Positions 22 to 138 (WSYSASTTNM…CNKKKLALCY (117 aa)) constitute a C-type lectin domain. The Extracellular portion of the chain corresponds to 22–555 (WSYSASTTNM…CEATAKSNIP (534 aa)). The N-linked (GlcNAc...) asparagine glycan is linked to N30. Disulfide bonds link C40–C137, C110–C129, C142–C153, C147–C162, C164–C173, C179–C223, C192–C205, C209–C236, C241–C285, C254–C267, C271–C298, C303–C348, C334–C361, C366–C411, C397–C424, C429–C474, C460–C487, C492–C533, and C519–C546. Ca(2+)-binding residues include E101, N103, and E108. Residues 101 to 108 (EPNNKQNE), 112 to 117 (EIYIKR), and 125 to 127 (NDE) contribute to the a carbohydrate site. Residues N125 and D126 each contribute to the Ca(2+) site. In terms of domain architecture, EGF-like spans 139-174 (TAACTHTSCSGHGECVETINNYTCQCHPGFTGLRCE). Residue N159 is glycosylated (N-linked (GlcNAc...) asparagine). 6 consecutive Sushi domains span residues 177-238 (VTCQ…ACHV), 239-300 (VECD…TCKA), 314-363 (VNCS…VCKA), 365-426 (QCKA…TCEA), 428-489 (RCDA…SCQV), and 490-548 (VQCA…TCEA). N-linked (GlcNAc...) asparagine glycans are attached at residues N198 and N202. N264 is a glycosylation site (N-linked (GlcNAc...) asparagine). 3 N-linked (GlcNAc...) asparagine glycosylation sites follow: N315, N327, and N331. N526 carries N-linked (GlcNAc...) asparagine glycosylation. A helical membrane pass occupies residues 556–577 (LTVGLSAAGTSLLTLASFLFWL). The Cytoplasmic segment spans residues 578 to 610 (LKRLRRKAKKFVPASSYQSLQSDGSYQMPSESA).

It belongs to the selectin/LECAM family. As to quaternary structure, interacts with SELPLG/PSGL1 and PODXL2 through the sialyl Lewis X epitope. SELPLG sulfation appears not to be required for this interaction.

It localises to the cell membrane. Functionally, cell-surface glycoprotein having a role in immunoadhesion. Mediates in the adhesion of blood neutrophils in cytokine-activated endothelium through interaction with SELPLG/PSGL1. May have a role in capillary morphogenesis. The polypeptide is E-selectin (SELE) (Equus caballus (Horse)).